The following is a 24-amino-acid chain: Brevinin-1Bd (24 aa).

Residues Cys18 and Cys24 are joined by a disulfide bond.

As to expression, expressed by the skin glands.

It is found in the secreted. Antibacterial activity against Gram-positive bacterium S.aureus and Gram-negative bacterium E.coli. Has activity against C.albicans. In Lithobates berlandieri (Rio Grande leopard frog), this protein is Brevinin-1Bd.